A 130-amino-acid chain; its full sequence is Glycoprotein hormone beta-5 (130 aa).

The N-terminal stretch at 1-24 (MKLAFLFLGPMALLLLAGYGCVLG) is a signal peptide. 5 disulfides stabilise this stretch: Cys-36-Cys-84, Cys-50-Cys-99, Cys-60-Cys-115, Cys-64-Cys-117, and Cys-120-Cys-127. Residue Asn-87 is glycosylated (N-linked (GlcNAc...) asparagine).

Belongs to the glycoprotein hormones subunit beta family. As to quaternary structure, heterodimer with GPHA2; this heterodimer interacts with thyroid-stimulating hormone receptor (TSHR), and hence stimulates cAMP production. N-glycosylated. As to expression, highly expressed in brain and at low levels in pituitary. Also found in retina, testis and skin but not in pancreas, parotid, kidney, stomach, liver, colon, small intestine, thyroid, brain or adrenal gland. In pituitary, colocalizes with ACTH, suggesting that it is located in corticotrophs.

The protein resides in the secreted. In terms of biological role, functions as a heterodimeric glycoprotein hormone with GPHA2 able to bind and activate the thyroid-stimulating hormone receptor (TSHR), leading to increased cAMP production. Plays a central role in controlling thyroid cell metabolism. In Homo sapiens (Human), this protein is Glycoprotein hormone beta-5 (GPHB5).